Here is a 134-residue protein sequence, read N- to C-terminus: Putative nickel-responsive regulator (134 aa).

Ni(2+)-binding residues include histidine 78, histidine 89, histidine 91, and cysteine 97.

The protein belongs to the transcriptional regulatory CopG/NikR family. The cofactor is Ni(2+).

Functionally, transcriptional regulator. This Chlorobaculum parvum (strain DSM 263 / NCIMB 8327) (Chlorobium vibrioforme subsp. thiosulfatophilum) protein is Putative nickel-responsive regulator.